We begin with the raw amino-acid sequence, 362 residues long: Manganese peroxidase 3 (362 aa).

An N-terminal signal peptide occupies residues 1–18 (MAFKQLLTAISIVSVANA). The propeptide occupies 19–23 (ALTRR). Cystine bridges form between Cys26/Cys39, Cys38/Cys309, Cys58/Cys144, and Cys273/Cys338. 2 residues coordinate Mn(2+): Glu60 and Glu64. The active-site Proton acceptor is the His71. Positions 72, 90, 92, and 94 each coordinate Ca(2+). Residue Asn126 is glycosylated (N-linked (GlcNAc...) asparagine). His200 lines the heme b pocket. Thr201 is a Ca(2+) binding site. Asp206 contributes to the Mn(2+) binding site. Residues Asp218, Thr220, Ile223, and Asp225 each coordinate Ca(2+). The interval 341–362 (TPFPSLSADPGPATSVAPVPPS) is disordered.

Belongs to the peroxidase family. Ligninase subfamily. The cofactor is heme b. Ca(2+) is required as a cofactor.

The protein resides in the secreted. It catalyses the reaction 2 Mn(2+) + H2O2 + 2 H(+) = 2 Mn(3+) + 2 H2O. In terms of biological role, catalyzes the oxidation of Mn(2+) to Mn(3+). The latter, acting as a diffusible redox mediator, is capable of oxidizing a variety of lignin compounds. This isozyme is also able to oxidize phenols and amines in the absence of Mn(2+), similar to versatile peroxidases. This Phlebia radiata (White-rot fungus) protein is Manganese peroxidase 3 (mnp3).